A 60-amino-acid polypeptide reads, in one-letter code: Metallothionein A (60 aa).

Residues 1–28 (MDPCECSKTGKCNCGTSCTCTNCSCKCC) form a beta region. Positions 4, 6, 12, 14, 18, 20, 23, 25, 28, 32, 33, 35, 36, 40, 43, 47, 49, 54, 58, and 59 each coordinate a divalent metal cation. The segment at 29 to 60 (KKSCCSCCPSGCSKCASGCVCKGNSCDKSCCQ) is alpha.

The protein belongs to the metallothionein superfamily. Type 1 family.

Metallothioneins have a high content of cysteine residues that bind various heavy metals. The sequence is that of Metallothionein A (mta) from Cyprinodon sp. (Pupfish).